The sequence spans 262 residues: Phosphonates import ATP-binding protein PhnC (262 aa).

One can recognise an ABC transporter domain in the interval 5–253 (IRVEKLAKTF…RFDHLYRSIN (249 aa)). 37–44 (GPSGSGKS) contributes to the ATP binding site.

The protein belongs to the ABC transporter superfamily. Phosphonates importer (TC 3.A.1.9.1) family. As to quaternary structure, the complex is composed of two ATP-binding proteins (PhnC), two transmembrane proteins (PhnE) and a solute-binding protein (PhnD).

The protein localises to the cell inner membrane. It catalyses the reaction phosphonate(out) + ATP + H2O = phosphonate(in) + ADP + phosphate + H(+). Its function is as follows. Part of the ABC transporter complex PhnCDE involved in phosphonates import. Responsible for energy coupling to the transport system. This Shigella sonnei (strain Ss046) protein is Phosphonates import ATP-binding protein PhnC.